An 862-amino-acid chain; its full sequence is DNA mismatch repair protein MutS (862 aa).

Residue 618-625 coordinates ATP; it reads GPNMGGKS. The tract at residues 799-824 is disordered; it reads QLESRDNQASPAVASAPQQQSLSLSP. Residues 806–824 show a composition bias toward low complexity; sequence QASPAVASAPQQQSLSLSP.

The protein belongs to the DNA mismatch repair MutS family.

This protein is involved in the repair of mismatches in DNA. It is possible that it carries out the mismatch recognition step. This protein has a weak ATPase activity. This chain is DNA mismatch repair protein MutS, found in Shewanella denitrificans (strain OS217 / ATCC BAA-1090 / DSM 15013).